The primary structure comprises 113 residues: Protein translation factor SUI1 homolog (113 aa).

A disordered region spans residues 1 to 24 (MSELDSQVPTAFDPFADANAEDSG). Position 2 is an N-acetylserine (Ser2).

It belongs to the SUI1 family.

Probably involved in translation. The sequence is that of Protein translation factor SUI1 homolog from Brassica oleracea (Wild cabbage).